We begin with the raw amino-acid sequence, 464 residues long: UDP-glycosyltransferase 76F2 (464 aa).

UDP-alpha-D-glucose contacts are provided by residues serine 279, 338–340 (VNQ), 355–363 (HCGWNSTIE), and 377–380 (FSDQ).

It belongs to the UDP-glycosyltransferase family.

The sequence is that of UDP-glycosyltransferase 76F2 (UGT76F2) from Arabidopsis thaliana (Mouse-ear cress).